The following is a 697-amino-acid chain: Testis-specific gene 10 protein (697 aa).

The segment at 556–688 (QMTNERISMQ…SPDRGLDRSL (133 aa)) is interaction with HIF1A. The interval 656–684 (NAYNLGPMKPNTKCHSPERAHHRSPDRGL) is disordered. The span at 670 to 684 (HSPERAHHRSPDRGL) shows a compositional bias: basic and acidic residues. S687 is subject to Phosphoserine.

Belongs to the CEP135/TSGA10 family. Interacts with HIF1A. Post-translationally, processed into N-terminal 27-kDa and C-terminal 55-kDa fragments. Predominantly expressed in testis, in spermatozoa (at protein level). Not detected in Leydig cells. The N-terminal 27-kDa fragment is also detected in liver, while the C-terminal 55-kDa fragment is also found retina, brain and kidney (at protein level).

Its subcellular location is the cytoplasm. It is found in the cytoskeleton. The protein localises to the microtubule organizing center. It localises to the centrosome. The protein resides in the centriole. In terms of biological role, plays a role in spermatogenesis. When overexpressed, prevents nuclear localization of HIF1A. The polypeptide is Testis-specific gene 10 protein (Tsga10) (Mus musculus (Mouse)).